The chain runs to 424 residues: Arginine biosynthesis bifunctional protein ArgJ (424 aa).

T166, K192, T203, E290, N419, and T424 together coordinate substrate. T203 functions as the Nucleophile in the catalytic mechanism.

The protein belongs to the ArgJ family. As to quaternary structure, heterotetramer of two alpha and two beta chains.

The protein resides in the cytoplasm. It carries out the reaction N(2)-acetyl-L-ornithine + L-glutamate = N-acetyl-L-glutamate + L-ornithine. The catalysed reaction is L-glutamate + acetyl-CoA = N-acetyl-L-glutamate + CoA + H(+). It functions in the pathway amino-acid biosynthesis; L-arginine biosynthesis; L-ornithine and N-acetyl-L-glutamate from L-glutamate and N(2)-acetyl-L-ornithine (cyclic): step 1/1. It participates in amino-acid biosynthesis; L-arginine biosynthesis; N(2)-acetyl-L-ornithine from L-glutamate: step 1/4. In terms of biological role, catalyzes two activities which are involved in the cyclic version of arginine biosynthesis: the synthesis of N-acetylglutamate from glutamate and acetyl-CoA as the acetyl donor, and of ornithine by transacetylation between N(2)-acetylornithine and glutamate. This chain is Arginine biosynthesis bifunctional protein ArgJ, found in Colwellia psychrerythraea (strain 34H / ATCC BAA-681) (Vibrio psychroerythus).